The following is a 251-amino-acid chain: Ubiquinone/menaquinone biosynthesis C-methyltransferase UbiE (251 aa).

Residues Thr-74, Asp-95, and Asn-123–Ala-124 each bind S-adenosyl-L-methionine.

This sequence belongs to the class I-like SAM-binding methyltransferase superfamily. MenG/UbiE family.

It carries out the reaction a 2-demethylmenaquinol + S-adenosyl-L-methionine = a menaquinol + S-adenosyl-L-homocysteine + H(+). The enzyme catalyses a 2-methoxy-6-(all-trans-polyprenyl)benzene-1,4-diol + S-adenosyl-L-methionine = a 5-methoxy-2-methyl-3-(all-trans-polyprenyl)benzene-1,4-diol + S-adenosyl-L-homocysteine + H(+). Its pathway is quinol/quinone metabolism; menaquinone biosynthesis; menaquinol from 1,4-dihydroxy-2-naphthoate: step 2/2. It functions in the pathway cofactor biosynthesis; ubiquinone biosynthesis. In terms of biological role, methyltransferase required for the conversion of demethylmenaquinol (DMKH2) to menaquinol (MKH2) and the conversion of 2-polyprenyl-6-methoxy-1,4-benzoquinol (DDMQH2) to 2-polyprenyl-3-methyl-6-methoxy-1,4-benzoquinol (DMQH2). The protein is Ubiquinone/menaquinone biosynthesis C-methyltransferase UbiE of Shewanella baltica (strain OS155 / ATCC BAA-1091).